The sequence spans 325 residues: Outer spore wall protein LDS1 (325 aa).

Residues methionine 1 to threonine 91 lie on the Cytoplasmic side of the membrane. A helical transmembrane segment spans residues methionine 92–alanine 112. Topologically, residues threonine 113–tyrosine 118 are extracellular. Residues threonine 119–leucine 139 traverse the membrane as a helical segment. Residues glutamine 140–leucine 208 are Cytoplasmic-facing. A helical transmembrane segment spans residues phenylalanine 209–isoleucine 229. At serine 230–tyrosine 263 the chain is on the extracellular side. A helical membrane pass occupies residues alanine 264–isoleucine 284. Residues serine 285–glutamine 325 are Cytoplasmic-facing.

This sequence belongs to the LDS family.

It is found in the prospore membrane. It localises to the lipid droplet. The protein localises to the spore wall. Functionally, involved in spore wall assembly. This is Outer spore wall protein LDS1 from Saccharomyces cerevisiae (strain ATCC 204508 / S288c) (Baker's yeast).